We begin with the raw amino-acid sequence, 555 residues long: Cytochrome P450 monooxygeanse terQ (555 aa).

Residues 10–30 (VPAHAWPTITVAGAVMVVVLL) form a helical membrane-spanning segment. Residue C479 coordinates heme. Residues 535 to 555 (DAGNTARVDPGAPDGVASEPS) form a disordered region.

This sequence belongs to the cytochrome P450 family. Requires heme as cofactor.

The protein resides in the membrane. Its pathway is secondary metabolite biosynthesis. Cytochrome P450 monooxygeanse; part of the gene cluster that mediates the biosynthesis of terpendoles, indole-diterpene (IDT) mycotoxins including terpendole I, terpendole K, terpendole C, as well as the kinesin Eg5 inhibitor terpendole E. TerQ is a C11-hydroxylating enzyme that converts paspalline into terpendole E. Is also able to hydroxylate 13-desoxyterpendole I at C-13 to produce terpendole I. Terpendoles biosynthesis begins with the synthesis of geranylgeranyl diphosphate (GGPP) by a yet unidentified GGPP synthase. Condensation of indole-3-glycerol phosphate with GGPP by the prenyltransferase terC then forms 3-geranylgeranylindole (3-GGI), followed by epoxidation and cyclization of this intermediate (by the FAD-dependent monooxygeanse terM and the terpene cyclase terB) to form paspaline. The cytochrome monooxygenase terQ then hydroxylates paspalline at C-11 to yield terpendole E. The cytochrome monooxygenase terP converts terpendole E to 13-desoxyterpendole I, and terQ converts 13-desoxyterpendole I into terpendole I. TerF and terK are required for conversion of terpendole I to terpendole C which is further converted to terpendole K. The chain is Cytochrome P450 monooxygeanse terQ from Tolypocladium album (Soil fungus).